Consider the following 244-residue polypeptide: Cell division protein ZapD (244 aa).

The protein belongs to the ZapD family. As to quaternary structure, interacts with FtsZ.

It localises to the cytoplasm. In terms of biological role, cell division factor that enhances FtsZ-ring assembly. Directly interacts with FtsZ and promotes bundling of FtsZ protofilaments, with a reduction in FtsZ GTPase activity. This is Cell division protein ZapD from Shewanella baltica (strain OS185).